We begin with the raw amino-acid sequence, 579 residues long: Laccase (579 aa).

A signal peptide (tat-type signal) is located at residues 1 to 31 (MTDWSRRRFLQTGAALGIAGTLPQTTTEVSA). Positions 82–214 (WGFDGSYPGP…AGLLGLYSIT (133 aa)) constitute a Plastocyanin-like 1 domain. Positions 145, 147, 192, and 194 each coordinate Cu cation. The interval 372 to 401 (VSDPSTPPEDASADPTSLSLPTPASYDESD) is disordered. The Plastocyanin-like 2 domain occupies 423–530 (LNGHVFGDED…NKMMIPFVVE (108 aa)). N-linked (GlcNAc...) asparagine glycosylation is present at Asn-449. His-455, His-458, His-460, His-512, Cys-513, His-514, His-518, and Met-523 together coordinate Cu cation. The N-linked (GlcNAc...) asparagine glycan is linked to Asn-557.

This sequence belongs to the multicopper oxidase family. Requires Cu(2+) as cofactor. Post-translationally, exported by the Tat system. In terms of processing, glycosylated.

It localises to the secreted. The catalysed reaction is 4 hydroquinone + O2 = 4 benzosemiquinone + 2 H2O. Its activity is regulated as follows. Inhibited by 1 mM NaN(3), 10 mM thiourea, 10 mM 1,10-phenanthroline, 0.1 mM DL-dithiothreitol (DTT) and 1 mM L-cysteine. The inhibition by DTT and L-cysteine is likely caused by reduction of the oxidized substrate and not by inhibition of the enzyme. Catalyzes the oxidation of a wide variety of organic substrates, including bilirubin, syringaldazine (SGZ), 2,2'-azino-di-(3-ethylbenzothiazoline)-6-sulfonic acid (ABTS) and dimethoxyphenol (DMP). No oxidation of Fe(2+) or guaiacol. This Haloferax volcanii (strain ATCC 29605 / DSM 3757 / JCM 8879 / NBRC 14742 / NCIMB 2012 / VKM B-1768 / DS2) (Halobacterium volcanii) protein is Laccase (lccA).